Consider the following 173-residue polypeptide: 3-isopropylmalate dehydratase small subunit (173 aa).

This sequence belongs to the LeuD family. LeuD type 2 subfamily. As to quaternary structure, heterodimer of LeuC and LeuD.

It carries out the reaction (2R,3S)-3-isopropylmalate = (2S)-2-isopropylmalate. The protein operates within amino-acid biosynthesis; L-leucine biosynthesis; L-leucine from 3-methyl-2-oxobutanoate: step 2/4. Functionally, catalyzes the isomerization between 2-isopropylmalate and 3-isopropylmalate, via the formation of 2-isopropylmaleate. The sequence is that of 3-isopropylmalate dehydratase small subunit from Caldicellulosiruptor saccharolyticus (strain ATCC 43494 / DSM 8903 / Tp8T 6331).